The sequence spans 86 residues: BolA-like protein 2 (86 aa).

M1 is modified (N-acetylmethionine).

This sequence belongs to the BolA/IbaG family. As to quaternary structure, interacts with GLRX3; forms a heterotrimeric complex composed by two BOLA2 molecules and one GLRX3 molecule; linked by [2Fe-2S] clusters.

Its subcellular location is the cytoplasm. The protein localises to the nucleus. Acts as a cytosolic iron-sulfur (Fe-S) cluster assembly factor that facilitates [2Fe-2S] cluster insertion into a subset of cytosolic proteins. Acts together with the monothiol glutaredoxin GLRX3. The chain is BolA-like protein 2 (Bola2) from Mus musculus (Mouse).